The chain runs to 970 residues: MKLEHPDRLMNRTPLSLAALETHDAFAERHIGPDAASQQAMLDTLGFATRAALIDAVIPASIRRAETLPLGPFAQPKSEAEALAALRALADKNQVFRSYIGQGYYDTHTPAVILRNVLENPAWYTAYTPYQPEISQGRLEALLNFQQMVADLTGLEISNASLLDEATAAAEAMTLLQRVGKPQSNVFYVADDVLPQTLEVIKTRAKPIGIEVKSGPAADAAAANAFGVLLQYPGANGDVRDYRALADAIHAAGGHVVVAADILALTVLMPPGEWGADVAVGNTQRFGVPMGFGGPHAAYMAVRDEFKRQMPGRLVGVTVDAQGKPALRLALQTREQHIRREKATSNVCTAQALLAIMASMYAVYHGPRGLKTIALRVNRIAALLAAGIRHLGYATVNDTFFDTLTIDTGARTAQLHAFAQAKRINLRRAGDTRVGVSVDETTTRADLADLLTIFAQAAGATAPDIDALDAGLLPAPALPPSLERTSAYLTHHVFNRHHSETEMLRYLRSLSDKDLALDRSMIPLGSCTMKLNATSEMLPVTWPEFGRIHPFAPAEQTVGYREMIDQLEQMLVAATGYAAVSLQPNAGSQGEYAGLLIIHAYHESRGESHRDVCLIPASAHGTNPASAHMAGMKVVVVACDAQGNVDIADLKAKADAHSHDLAAIMITYPSTHGVFEQNVREICEIVHAHGGQVYVDGANMNAMVGLTAPGQFGGDVSHLNLHKTFCIPHGGGGPGVGPHLAKFLPNQRSTGYARGEDGIGAVSAAPYGSASILPISWMYIAMMGAKNLTAATETAILNANYIAKRLAPHYPVLYSGPGGLVAHECILDLRPIKDSSGITVDDVAKRLMDYGFHAPTMSFPVPGTLMVEPTESESQEELDRFIAAMIAIRDEIRAVEEGRADREDNPLRHAPHTAAVVTANEWPHAYSREQAAFPVASLVANKYWPPVGRADNAYGDRNLFCSCVPVSDYA.

Lys-723 carries the post-translational modification N6-(pyridoxal phosphate)lysine.

It belongs to the GcvP family. In terms of assembly, the glycine cleavage system is composed of four proteins: P, T, L and H. Requires pyridoxal 5'-phosphate as cofactor.

It catalyses the reaction N(6)-[(R)-lipoyl]-L-lysyl-[glycine-cleavage complex H protein] + glycine + H(+) = N(6)-[(R)-S(8)-aminomethyldihydrolipoyl]-L-lysyl-[glycine-cleavage complex H protein] + CO2. Its function is as follows. The glycine cleavage system catalyzes the degradation of glycine. The P protein binds the alpha-amino group of glycine through its pyridoxal phosphate cofactor; CO(2) is released and the remaining methylamine moiety is then transferred to the lipoamide cofactor of the H protein. This chain is Glycine dehydrogenase (decarboxylating), found in Burkholderia pseudomallei (strain 1106a).